We begin with the raw amino-acid sequence, 224 residues long: Peptide deformylase 3 (224 aa).

Fe cation is bound by residues Cys-135 and His-177. Residue Glu-178 is part of the active site. His-181 is a binding site for Fe cation.

The protein belongs to the polypeptide deformylase family. The cofactor is Fe(2+).

The catalysed reaction is N-terminal N-formyl-L-methionyl-[peptide] + H2O = N-terminal L-methionyl-[peptide] + formate. In terms of biological role, removes the formyl group from the N-terminal Met of newly synthesized proteins. Requires at least a dipeptide for an efficient rate of reaction. N-terminal L-methionine is a prerequisite for activity but the enzyme has broad specificity at other positions. The polypeptide is Peptide deformylase 3 (Streptomyces avermitilis (strain ATCC 31267 / DSM 46492 / JCM 5070 / NBRC 14893 / NCIMB 12804 / NRRL 8165 / MA-4680)).